The following is a 188-amino-acid chain: Ribosome maturation factor RimP (188 aa).

Belongs to the RimP family.

It is found in the cytoplasm. Its function is as follows. Required for maturation of 30S ribosomal subunits. This Erythrobacter litoralis (strain HTCC2594) protein is Ribosome maturation factor RimP.